Reading from the N-terminus, the 3763-residue chain is Colossin-B (3763 aa).

An N-terminal signal peptide occupies residues 1-19 (MKGSIFLLFIFQIFKFSSS). 4 N-linked (GlcNAc...) asparagine glycosylation sites follow: Asn-43, Asn-110, Asn-258, and Asn-284. In terms of domain architecture, Follistatin-like 1 spans 619 to 643 (DCSTLQCPSGYECKLDKNSKTRGCI). Asn-652 and Asn-672 each carry an N-linked (GlcNAc...) asparagine glycan. Follistatin-like domains are found at residues 701-724 (HCRN…PRCF) and 729-752 (PCEF…AKCF). The interval 792-832 (PPIFYETPSPTSAPPTETPSPTDTPTDKPTIPPTPTPTPSK) is disordered. Residues 810 to 820 (PSPTDTPTDKP) are compositionally biased toward low complexity. 2 N-linked (GlcNAc...) asparagine glycosylation sites follow: Asn-845 and Asn-991. Disordered stretches follow at residues 1033-1068 (LGSS…SESS) and 1095-1124 (PQPT…PTST). Gly residues predominate over residues 1036 to 1051 (SGSGSSGNSGSSGSGG). 2 stretches are compositionally biased toward low complexity: residues 1052–1068 (SSND…SESS) and 1099–1124 (PSTD…PTST). Asn-1054 carries an N-linked (GlcNAc...) asparagine glycan. The CNA-B 1 domain maps to 1159-1227 (VSGVEITLIQ…LLNKYPIDTS (69 aa)). Residues Asn-1229 and Asn-1247 are each glycosylated (N-linked (GlcNAc...) asparagine). A CNA-B 2 domain is found at 1304 to 1373 (IKGIQVTLKD…VYTMDTFQLS (70 aa)). An N-linked (GlcNAc...) asparagine glycan is attached at Asn-1381. CNA-B domains lie at 1437–1515 (LPGV…IDTK), 1582–1648 (VPGI…LTLD), and 1731–1809 (VGGV…FTLS). N-linked (GlcNAc...) asparagine glycans are attached at residues Asn-1769 and Asn-1815. Positions 1883–1955 (GSTVDGGTSV…SEQPPEDSME (73 aa)) are disordered. Over residues 1898–1948 (STSTTTVSSSPSSSSDIGSSSDISSEVSSSLSSSPSSSEQPSEQSSSSSEQ) the composition is skewed to low complexity. One can recognise a CNA-B 6 domain in the interval 2015–2083 (VPDVTVTLVN…DPLSGKIDFN (69 aa)). Residues Asn-2128, Asn-2145, Asn-2243, Asn-2294, Asn-2351, Asn-2378, Asn-2453, Asn-2493, Asn-2496, Asn-2516, Asn-2572, Asn-2601, Asn-2624, Asn-2668, Asn-2698, Asn-2714, Asn-2781, Asn-2787, Asn-2800, Asn-2838, and Asn-2858 are each glycosylated (N-linked (GlcNAc...) asparagine). One can recognise a CNA-B 7 domain in the interval 2143–2197 (FPNITVRLFDQNLQPVLDNFNIQVEPTVTNALGQYYFDNLHSGSYIVKFEVPTRY). Positions 2292–2345 (VPNVTVEIFNPTGQQVYNINELLIGSTTTDSNGYYLFDEIQPGSYIIKFSNIPN) constitute a CNA-B 8 domain. One can recognise a CNA-B 9 domain in the interval 2453-2477 (NTTTTDQNGLYYFDNLSPGLYKLLF). The CNA-B 10 domain occupies 2713–2766 (VNGTIVTLLDINGNTMVDADSYPINSYTTGPDGYYKFDDFSFGKYIITFSGVPD). The region spanning 2984–3061 (LGGVVVTLYN…DSNASPVDGY (78 aa)) is the CNA-B 11 domain. Residues Asn-3083, Asn-3130, Asn-3372, Asn-3390, Asn-3459, Asn-3466, Asn-3557, Asn-3666, Asn-3676, and Asn-3681 are each glycosylated (N-linked (GlcNAc...) asparagine). The 74-residue stretch at 3128-3201 (YPNITVSIYT…TKTGVNLGII (74 aa)) folds into the CNA-B 12 domain. A CNA-B 13 domain is found at 3664-3733 (MANITVQLFS…NDKRDLEKIN (70 aa)).

The protein belongs to the serine-aspartate repeat-containing protein (SDr) family.

It localises to the secreted. This chain is Colossin-B (colB), found in Dictyostelium discoideum (Social amoeba).